The following is a 409-amino-acid chain: MGLQKSHLTVCLPPSVPFLILVSTLATAKSVTNSTLNGTDVVLGSVPVIIARTDHIIVKEGSSALINCSAYGFPDLEFKWYNSVGKLLKEMDDEKEKGGGKWQMLDGGLLNITKVSFSDRGKYTCVASNIYGTINNTVTLRVIFTSGDMGVYYMVVCLVAFTIVMILNITRLCMMSSHLKKTEKAINEFFRTEGAEKLQKAFEIAKRIPIITSAKTLELAKVTQFKTMEFARYIEELARSVPLPPLIMNCRTIMEEIMEVVGLEEQGQNFVRHTPEGQEAPDRDEVYTIPNSLKRSESPTADSDASSLHEQPQQIAIKVSVHPQSKRDHVDDQEGGHFEVKDEEETEPSEEHSPETAEPSTDITTTELTSEETSPVEAPERGLPPAHLETTEPAVTCDRNTCIIYESHV.

An N-terminal signal peptide occupies residues 1–28 (MGLQKSHLTVCLPPSVPFLILVSTLATA). Residues 29 to 148 (KSVTNSTLNG…TLRVIFTSGD (120 aa)) are Extracellular-facing. N-linked (GlcNAc...) asparagine glycosylation is found at Asn-33, Asn-37, Asn-67, Asn-111, and Asn-135. The Ig-like C2-type domain occupies 47–141 (PVIIARTDHI…GTINNTVTLR (95 aa)). A disulfide bridge links Cys-68 with Cys-125. A helical transmembrane segment spans residues 149–169 (MGVYYMVVCLVAFTIVMILNI). The Cytoplasmic portion of the chain corresponds to 170-409 (TRLCMMSSHL…NTCIIYESHV (240 aa)). Tyr-287 carries the phosphotyrosine modification. Ser-298, Ser-303, Ser-306, and Ser-307 each carry phosphoserine. The disordered stretch occupies residues 319–395 (VSVHPQSKRD…AHLETTEPAV (77 aa)). Positions 325-340 (SKRDHVDDQEGGHFEV) are enriched in basic and acidic residues. The span at 356–373 (TAEPSTDITTTELTSEET) shows a compositional bias: low complexity.

Its subcellular location is the cell membrane. The protein resides in the nucleus. It is found in the cytoplasm. Functionally, may participate in the nuclear signaling of EGFR and MAPK1/ERK2. In Mus musculus (Mouse), this protein is Microfibrillar-associated protein 3-like (Mfap3l).